Here is a 252-residue protein sequence, read N- to C-terminus: 7-carboxy-7-deazaguanine synthase (252 aa).

Residues 22 to 24 and Arg-37 contribute to the substrate site; that span reads LQG. Residues 28–251 form the Radical SAM core domain; it reads FVGEPQAFVR…QVHKLVDFIP (224 aa). [4Fe-4S] cluster is bound by residues Cys-41, Cys-45, and Cys-48. Thr-102 provides a ligand contact to substrate. Gly-104 is an S-adenosyl-L-methionine binding site.

This sequence belongs to the radical SAM superfamily. 7-carboxy-7-deazaguanine synthase family. In terms of assembly, homodimer. Requires [4Fe-4S] cluster as cofactor. The cofactor is S-adenosyl-L-methionine. It depends on Mg(2+) as a cofactor.

The catalysed reaction is 6-carboxy-5,6,7,8-tetrahydropterin + H(+) = 7-carboxy-7-deazaguanine + NH4(+). Its pathway is purine metabolism; 7-cyano-7-deazaguanine biosynthesis. Catalyzes the complex heterocyclic radical-mediated conversion of 6-carboxy-5,6,7,8-tetrahydropterin (CPH4) to 7-carboxy-7-deazaguanine (CDG), a step common to the biosynthetic pathways of all 7-deazapurine-containing compounds. In Methanopyrus kandleri (strain AV19 / DSM 6324 / JCM 9639 / NBRC 100938), this protein is 7-carboxy-7-deazaguanine synthase.